A 1855-amino-acid polypeptide reads, in one-letter code: Chitin synthase 5 (1855 aa).

The Myosin motor domain maps to 1–778 (MSSAPTTQQN…CWRQIVRAGD (778 aa)). 95-102 (GESGTGKT) is a binding site for ATP. N-linked (GlcNAc...) asparagine glycans are attached at residues Asn221, Asn520, and Asn558. Positions 585–650 (AVQQASVASK…PKSADTQQGA (66 aa)) are disordered. The actin-binding stretch occupies residues 658–682 (LDNINKSLTAPNTNPYFFFCLKPND). A glycan (N-linked (GlcNAc...) asparagine) is linked at Asn662. 2 helical membrane passes run 887–907 (WLVL…RIIG) and 922–942 (VAIN…MVGF). The 59-residue stretch at 950–1008 (QHVFSPSELTSYDGKNSDAYVAIRGNVFDLGAFIPQHYPSIVPASALEKYAGTDATNLF) folds into the Cytochrome b5 heme-binding domain. N-linked (GlcNAc...) asparagine glycans are attached at residues Asn1037 and Asn1061. A helical transmembrane segment spans residues 1199 to 1219 (ILLAVSIMLVSVICFKFLAAL). Residues Asn1422, Asn1456, and Asn1562 are each glycosylated (N-linked (GlcNAc...) asparagine). 3 helical membrane-spanning segments follow: residues 1587–1607 (FVVF…GYIV), 1621–1641 (ATTA…IFIV), and 1650–1670 (WMII…LIAF). N-linked (GlcNAc...) asparagine glycans are attached at residues Asn1755 and Asn1767. Positions 1797 to 1852 (MPNDDAILAEIREILATADLMTVTKKSIKAELERRFGVPMDSRRQYIGSATEAILS) constitute a DEK-C domain.

In the N-terminal section; belongs to the TRAFAC class myosin-kinesin ATPase superfamily. Myosin family. The protein in the C-terminal section; belongs to the chitin synthase family. Class V subfamily.

The protein resides in the apical cell membrane. It is found in the cell septum. It localises to the cell tip. The catalysed reaction is [(1-&gt;4)-N-acetyl-beta-D-glucosaminyl](n) + UDP-N-acetyl-alpha-D-glucosamine = [(1-&gt;4)-N-acetyl-beta-D-glucosaminyl](n+1) + UDP + H(+). In terms of biological role, polymerizes chitin, a structural polymer of the cell wall and septum, by transferring the sugar moiety of UDP-GlcNAc to the non-reducing end of the growing chitin polymer. The protein is Chitin synthase 5 of Zymoseptoria tritici (strain CBS 115943 / IPO323) (Speckled leaf blotch fungus).